Reading from the N-terminus, the 364-residue chain is Geranylfarnesyl diphosphate synthase, chloroplastic (364 aa).

Residues 1 to 51 constitute a chloroplast transit peptide; sequence MSHCTIFLYKYFPGKPRYQHCSFLHPLNHKLKSLFLPITGSRFLSNSTFSV. Lysine 72, lysine 111, and histidine 143 together coordinate isopentenyl diphosphate. The Mg(2+) site is built by aspartate 150 and aspartate 156. Arginine 161 contacts dimethylallyl diphosphate. Arginine 162 serves as a coordination point for isopentenyl diphosphate. The dimethylallyl diphosphate site is built by lysine 249, threonine 250, glutamine 287, aspartate 294, lysine 304, and lysine 314.

It belongs to the FPP/GGPP synthase family. Monomer. Requires Mg(2+) as cofactor. As to expression, strongly expressed in glandular trichomes, and, at low levels, in leaves, stems and flowers.

The protein resides in the plastid. Its subcellular location is the chloroplast. The enzyme catalyses isopentenyl diphosphate + (2E,6E,10E)-geranylgeranyl diphosphate = (2E,6E,10E,14E)-geranylfarnesyl diphosphate + diphosphate. It carries out the reaction 2 isopentenyl diphosphate + (2E,6E)-farnesyl diphosphate = (2E,6E,10E,14E)-geranylfarnesyl diphosphate + 2 diphosphate. The catalysed reaction is 3 isopentenyl diphosphate + (2E)-geranyl diphosphate = (2E,6E,10E,14E)-geranylfarnesyl diphosphate + 3 diphosphate. It catalyses the reaction 4 isopentenyl diphosphate + dimethylallyl diphosphate = (2E,6E,10E,14E)-geranylfarnesyl diphosphate + 4 diphosphate. The protein operates within secondary metabolite biosynthesis; terpenoid biosynthesis. It participates in isoprenoid biosynthesis. Involved in the biosynthesis of leucosceptrane sesterterpenoids natural products, which are playing defensive roles toward herbivorus insects (e.g. Spodoptera exigua). Catalyzes the condensation of isopentenyl pyrophosphate (IDP) with the allylic pyrophosphates to yield geranylfarnesyl diphosphate (GFDP), the C(25) prenyl diphosphate precursor to all sesterterpenoids. Geranylgeranyl diphosphate (GGPP) is the preferred substrate, however dimethylallyl diphosphate (DMADP), farnesyl diphosphate (FDP) and geranyl diphosphate (GDP) can also be used as allylic substrate. The sequence is that of Geranylfarnesyl diphosphate synthase, chloroplastic from Leucosceptrum canum (Hairy white-wand).